A 4660-amino-acid polypeptide reads, in one-letter code: Low-density lipoprotein receptor-related protein 2 (4660 aa).

A signal peptide spans 1 to 25 (MERGAAAAAWMLLLAIAACLAPVSG). Over 26-4425 (QECGSGNFRC…LSRGIPPGTT (4400 aa)) the chain is Extracellular. LDL-receptor class A domains follow at residues 27–63 (ECGS…IGCP), 66–104 (SCGS…QNCP), 107–143 (TCSS…RNCY), 146–180 (TCDQ…ANCT), 182–218 (LCSQ…HNCN), 221–257 (TCGG…DGCE), and 264–307 (TCYP…RYCG). Disulfide bonds link Cys-28-Cys-40, Cys-35-Cys-53, Cys-47-Cys-62, Cys-67-Cys-80, Cys-74-Cys-93, Cys-87-Cys-103, Cys-108-Cys-120, Cys-115-Cys-133, Cys-127-Cys-142, Cys-147-Cys-157, Cys-152-Cys-170, Cys-164-Cys-179, Cys-183-Cys-195, Cys-190-Cys-208, Cys-202-Cys-217, Cys-222-Cys-234, Cys-229-Cys-247, Cys-241-Cys-256, Cys-265-Cys-278, Cys-272-Cys-291, and Cys-285-Cys-306. N-linked (GlcNAc...) asparagine glycans are attached at residues Asn-159 and Asn-178. Residues Asn-299, Asn-340, Asn-387, and Asn-462 are each glycosylated (N-linked (GlcNAc...) asparagine). LDL-receptor class B repeat units follow at residues 435–477 (HRVF…DWIN), 478–520 (NKLY…DPTV), 521–567 (GYLF…DLVS), and 568–612 (KRVY…FEEH). Asn-657 carries an N-linked (GlcNAc...) asparagine glycan. 4 LDL-receptor class B repeats span residues 752–794 (STIF…DWIS), 795–836 (RNLY…HPAA), 837–880 (GYMF…DWST), and 881–924 (SRLY…FKDN). The N-linked (GlcNAc...) asparagine glycan is linked to Asn-865. One can recognise an LDL-receptor class A 8 domain in the interval 1024 to 1060 (QCGSSSFPCNNGKCVPSIFRCDGVDDCHDNSDEHQCG). Disulfide bonds link Cys-1025–Cys-1037, Cys-1032–Cys-1050, and Cys-1044–Cys-1059. An N-linked (GlcNAc...) asparagine glycan is attached at Asn-1063. LDL-receptor class A domains are found at residues 1065-1102 (TCSS…QNCP), 1109-1145 (TCPP…KNCQ), 1149-1185 (TCHP…AGCV), 1187-1224 (NCTS…AGCP), 1230-1268 (MCHP…NGCV), 1271-1307 (TCSP…KDCP), and 1312-1350 (HCPS…PLCN). 9 disulfides stabilise this stretch: Cys-1066/Cys-1079, Cys-1073/Cys-1092, Cys-1086/Cys-1101, Cys-1110/Cys-1122, Cys-1117/Cys-1135, Cys-1129/Cys-1144, Cys-1150/Cys-1162, Cys-1157/Cys-1175, and Cys-1169/Cys-1184. Residues Trp-1127, Asp-1130, Asp-1132, Asp-1134, Asp-1140, and Glu-1141 each contribute to the Ca(2+) site. An N-linked (GlcNAc...) asparagine glycan is attached at Asn-1187. Intrachain disulfides connect Cys-1188/Cys-1201, Cys-1195/Cys-1214, Cys-1208/Cys-1223, Cys-1231/Cys-1244, Cys-1238/Cys-1257, Cys-1251/Cys-1267, Cys-1272/Cys-1284, Cys-1279/Cys-1297, Cys-1291/Cys-1306, Cys-1313/Cys-1326, Cys-1320/Cys-1339, Cys-1333/Cys-1349, Cys-1354/Cys-1365, Cys-1361/Cys-1374, Cys-1376/Cys-1389, Cys-1395/Cys-1405, Cys-1401/Cys-1414, and Cys-1416/Cys-1429. Ca(2+) is bound by residues Tyr-1206, Asp-1209, Val-1211, Asp-1213, Asp-1219, and Glu-1220. N-linked (GlcNAc...) asparagine glycans are attached at residues Asn-1328 and Asn-1341. Residues 1350-1390 (NQDSCLHFNGGCTHRCIQGPFGATCVCPIGYQLANDTKTCE) enclose the EGF-like 1 domain. Asn-1384 is a glycosylation site (N-linked (GlcNAc...) asparagine). Residues 1391-1430 (DVNECDIPGFCSQHCVNMRGSFRCACDPEYTLESDGRTCK) form the EGF-like 2; calcium-binding domain. 3 N-linked (GlcNAc...) asparagine glycosylation sites follow: Asn-1451, Asn-1497, and Asn-1551. 5 LDL-receptor class B repeats span residues 1479-1521 (GRVF…DWIG), 1522-1564 (RNIY…DPRM), 1567-1610 (NVMF…DYPN), 1611-1655 (RLIY…FEDS), and 1656-1696 (VFWT…IHPS). Residues Asn-1676, Asn-1733, and Asn-1811 are each glycosylated (N-linked (GlcNAc...) asparagine). 10 LDL-receptor class B repeats span residues 1791–1833 (QFIY…DWVS), 1834–1883 (RNIY…DPAR), 1884–1931 (GKLY…DIQE), 1932–1973 (QKLY…HGSF), 1974–2014 (LYYS…YHHR), 2108–2157 (GFIY…DWVA), 2158–2202 (GNLY…DPKH), 2203–2246 (RYLF…DHDT), 2247–2290 (GYIY…FGES), and 2291–2333 (IIWV…FDEH). Asn-2131, Asn-2134, Asn-2178, and Asn-2225 each carry an N-linked (GlcNAc...) asparagine glycan. Residue Asn-2396 is glycosylated (N-linked (GlcNAc...) asparagine). LDL-receptor class B repeat units follow at residues 2432-2478 (NRIF…DWIN), 2479-2519 (RRIY…DPCR), 2520-2563 (GYMY…DLET), 2564-2605 (DLLY…YGQY), and 2606-2647 (IYWT…VVKT). N-linked (GlcNAc...) asparagine glycans are attached at residues Asn-2488 and Asn-2548. 10 consecutive LDL-receptor class A domains span residues 2700 to 2738 (RCNQ…TVCA), 2741 to 2777 (TCRS…AGCL), 2780 to 2819 (SCNS…KNCP), 2822 to 2861 (TCQP…IYCA), 2864 to 2902 (TCRS…DTCG), 2907 to 2946 (SCSA…HHCE), 2949 to 2991 (NCSS…QNCT), 2994 to 3030 (ACST…RGCS), 3033 to 3071 (PCRD…HLCH), and 3076 to 3112 (TCPP…KGCG). 18 disulfide bridges follow: Cys-2701-Cys-2713, Cys-2708-Cys-2726, Cys-2720-Cys-2737, Cys-2742-Cys-2754, Cys-2749-Cys-2767, Cys-2761-Cys-2776, Cys-2781-Cys-2794, Cys-2789-Cys-2807, Cys-2801-Cys-2818, Cys-2823-Cys-2836, Cys-2830-Cys-2849, Cys-2843-Cys-2860, Cys-2865-Cys-2878, Cys-2872-Cys-2891, Cys-2885-Cys-2901, Cys-2908-Cys-2920, Cys-2915-Cys-2933, and Cys-2927-Cys-2945. Asn-2782 carries an N-linked (GlcNAc...) asparagine glycan. Residue Asn-2810 is glycosylated (N-linked (GlcNAc...) asparagine). The N-linked (GlcNAc...) asparagine glycan is linked to Asn-2949. Disulfide bonds link Cys-2950–Cys-2967, Cys-2957–Cys-2980, Cys-2974–Cys-2990, Cys-2995–Cys-3007, Cys-3002–Cys-3020, Cys-3014–Cys-3029, Cys-3034–Cys-3046, Cys-3041–Cys-3059, Cys-3053–Cys-3070, Cys-3077–Cys-3089, Cys-3084–Cys-3102, Cys-3096–Cys-3111, Cys-3116–Cys-3128, Cys-3124–Cys-3137, Cys-3139–Cys-3152, Cys-3158–Cys-3169, Cys-3165–Cys-3178, and Cys-3180–Cys-3193. N-linked (GlcNAc...) asparagine glycosylation is present at Asn-2989. Positions 3112 to 3153 (GINECQDSSISHCDHNCTDTITSFYCSCLPGYKLMSDKRTCV) constitute an EGF-like 3 domain. The N-linked (GlcNAc...) asparagine glycan is linked to Asn-3127. Residues 3154-3194 (DIDECKETPQLCSQKCENVIGSYICKCAPGYIREPDGKSCR) form the EGF-like 4; calcium-binding domain. Residues Asn-3213, Asn-3259, Asn-3317, and Asn-3357 are each glycosylated (N-linked (GlcNAc...) asparagine). LDL-receptor class B repeat units lie at residues 3241-3283 (ERLY…DWVS), 3284-3326 (RKLY…ENPR), 3335-3378 (GYVY…DYTN), 3379-3421 (DLLY…FEDT), and 3422-3462 (VFWT…LHPY). A glycan (N-linked (GlcNAc...) asparagine) is linked at Asn-3448. 8 LDL-receptor class A domains span residues 3513–3551 (MCSS…DLCP), 3554–3592 (FCRL…VLCE), 3595–3633 (RCEA…SHCA), 3636–3674 (TCRP…HECM), 3679–3717 (NCDN…QGCE), 3720–3757 (PCHP…ESCV), 3760–3796 (ECTE…RDCE), and 3799–3835 (TCHP…SACP). Intrachain disulfides connect Cys-3514/Cys-3527, Cys-3521/Cys-3540, Cys-3534/Cys-3550, Cys-3555/Cys-3567, Cys-3562/Cys-3580, Cys-3574/Cys-3591, Cys-3596/Cys-3608, Cys-3603/Cys-3621, Cys-3615/Cys-3632, Cys-3637/Cys-3649, Cys-3644/Cys-3662, Cys-3656/Cys-3673, Cys-3680/Cys-3694, Cys-3688/Cys-3707, Cys-3701/Cys-3716, Cys-3721/Cys-3734, Cys-3729/Cys-3747, Cys-3741/Cys-3756, Cys-3761/Cys-3773, Cys-3768/Cys-3786, Cys-3780/Cys-3795, Cys-3800/Cys-3812, Cys-3807/Cys-3825, and Cys-3819/Cys-3834. Asn-3566 is a glycosylation site (N-linked (GlcNAc...) asparagine). Asn-3682 carries an N-linked (GlcNAc...) asparagine glycan. N-linked (GlcNAc...) asparagine glycosylation occurs at Asn-3840. 3 consecutive LDL-receptor class A domains span residues 3843-3881 (YCPA…HLCF), 3884-3923 (PCES…EHCR), and 3929-3965 (PCTD…TGCN). Disulfide bonds link Cys-3844–Cys-3856, Cys-3851–Cys-3869, Cys-3863–Cys-3880, Cys-3885–Cys-3898, Cys-3893–Cys-3911, Cys-3905–Cys-3922, Cys-3930–Cys-3942, Cys-3937–Cys-3955, and Cys-3949–Cys-3964. N-linked (GlcNAc...) asparagine glycosylation is found at Asn-3969 and Asn-3980. The EGF-like 5; calcium-binding domain maps to 4009-4050 (DINECEEFGICPQSCRNSKGSYECFCVDGFKSMSTHYGERCA). Intrachain disulfides connect Cys-4013/Cys-4023, Cys-4019/Cys-4032, and Cys-4034/Cys-4049. The N-linked (GlcNAc...) asparagine glycan is linked to Asn-4070. LDL-receptor class B repeat units lie at residues 4156-4198 (RHIY…NPKL), 4199-4242 (GLMF…DYLN), and 4244-4285 (DRIY…FEDQ). Asn-4329 is a glycosylation site (N-linked (GlcNAc...) asparagine). The region spanning 4379–4413 (MPSPCRCMHGGSCYFDENDLPKCKCSSGYSGEYCE) is the EGF-like 6 domain. Intrachain disulfides connect Cys-4383–Cys-4391, Cys-4385–Cys-4401, and Cys-4403–Cys-4412. A helical membrane pass occupies residues 4426–4446 (MALLLTFAMVIIVGALVLVGF). The Cytoplasmic portion of the chain corresponds to 4447–4660 (FHYRKTGSLL…ANLVKEDSDV (214 aa)). An SH3-binding motif is present at residues 4454 to 4463 (SLLPSLPKLP). Residues 4457-4462 (PSLPKL) carry the PxLPxI/L motif 1; mediates interaction with ANKRA2 motif. Positions 4460 to 4465 (PKLPSL) match the PxLPxI/L motif 2; mediates interaction with ANKRA2 motif. 2 positions are modified to phosphoserine: Ser-4464 and Ser-4467. The short motif at 4522 to 4527 (FENPMY) is the Endocytosis signal element. The segment at 4558-4660 (QNYGRSIDPS…ANLVKEDSDV (103 aa)) is disordered. At Ser-4577 the chain carries Phosphoserine. Residues 4597–4610 (QTTNFENPIYAEMD) form an interaction with DAB2 region. An NPXY motif motif is present at residues 4603 to 4606 (NPIY). The SH2-binding signature appears at 4606 to 4609 (YAEM). The SH3-binding motif lies at 4619–4630 (VAPPPSPSLPAK). Position 4624 is a phosphoserine (Ser-4624). The segment covering 4627–4636 (LPAKASKRSS) has biased composition (low complexity). Residue Thr-4637 is modified to Phosphothreonine. Ser-4658 is subject to Phosphoserine.

It belongs to the LDLR family. In terms of assembly, binds plasminogen, extracellular matrix components, plasminogen activator-plasminogen activator inhibitor type I complex, apolipoprotein E-enriched beta-VLDL, lipoprotein lipase, lactoferrin, CLU/clusterin and calcium. Forms a multimeric complex together with LRPAP1. Interacts (via PxLPxI/L motif) with ANKRA2 (via ankyrin repeats). Interacts with LRP2BP. Interacts (via NPXY motif) with DAB2; the interaction is not affected by tyrosine phosphorylation of the NPXY motif. Interacts with MB. Interacts with BMP4. Interacts with the Sonic hedgehog protein N-product which is the active product of SHH. Interacts with CST3 in a calcium-dependent manner. Interacts with the vitamin-D binding protein GC/DBP. Interacts with sex hormone-binding protein SHBG. Interacts with angiotensin-2. Also interacts with angiotensin 1-7. Interacts with APOM. Interacts with selenoprotein SEPP1. Interacts with LEP. Interacts with ALB. Interacts with the antiapoptotic protein BIRC5/survivin. Interacts with matrix metalloproteinase MMP2 in complex with metalloproteinase inhibitor TIMP1. In neurons, forms a trimeric complex with APP and APPB1/FE65. Interacts with LDLRAP1/ARH; mediates trafficking of LRP2 to the endocytic recycling compartment. Does not interact with beta-amyloid protein 40 alone but interacts with the complex composed of beta-amyloid protein 40 and CLU/APOJ. Interacts with MDK. A fraction undergoes proteolytic cleavage of the extracellular domain at the cell membrane to generate a cytoplasmic tail fragment. This is internalized into the early endosome from where it trafficks in an LDLRAP1/ARH-dependent manner to the endocytic recycling compartment (ERC). In the ERC, it is further cleaved by gamma-secretase to release a fragment which translocates to the nucleus and mediates transcriptional repression. Post-translationally, N-glycosylation is required for ligand binding. Contains core-fucosylated N-glycans in kidney proximal convoluted tubules (PCTs) and hybrid-type N-glycans in proximal straight tubules (PSTs). Interacts with ligands in a glycoform-dependent manner. Retinol-binding protein and the vitamin D carrier GC/DBP are endocytosed primarily by PCTs, albumin is endocytosed equally by PCTs and PSTs, and the aminoglycoside kanamycin is endocytosed primarily by PSTs. In terms of tissue distribution, in the inner ear, strongly expressed in the marginal cells of the stria vascularis (at protein level). In the female reproductive tract, expressed on the luminal side of the uterine epithelium (at protein level). In the adult brain, expressed in ependymal cells of the lateral ventricles where expression is restricted to the ependyma that faces the stem cell niche (at protein level). Expressed in neurons throughout the brain including in the hippocampus, limbic cortices and cerebellum (at protein level). In the developing optic nerve, expressed exclusively in astrocytes at 14.5 dpc, 16.5 dpc and 18.5 dpc (at protein level).

It localises to the apical cell membrane. Its subcellular location is the endosome lumen. The protein resides in the membrane. It is found in the coated pit. The protein localises to the cell projection. It localises to the dendrite. Its subcellular location is the axon. Its function is as follows. Multiligand endocytic receptor. Acts together with CUBN to mediate endocytosis of high-density lipoproteins. Mediates receptor-mediated uptake of polybasic drugs such as aprotinin, aminoglycosides and polymyxin B. In the kidney, mediates the tubular uptake and clearance of leptin. Also mediates transport of leptin across the blood-brain barrier through endocytosis at the choroid plexus epithelium. Endocytosis of leptin in neuronal cells is required for hypothalamic leptin signaling and leptin-mediated regulation of feeding and body weight. Mediates endocytosis and subsequent lysosomal degradation of CST3 in kidney proximal tubule cells. Mediates renal uptake of 25-hydroxyvitamin D3 in complex with the vitamin D3 transporter GC/DBP. Mediates renal uptake of metallothionein-bound heavy metals. Together with CUBN, mediates renal reabsorption of myoglobin. Mediates renal uptake and subsequent lysosomal degradation of APOM. Plays a role in kidney selenium homeostasis by mediating renal endocytosis of selenoprotein SEPP1. Mediates renal uptake of the antiapoptotic protein BIRC5/survivin which may be important for functional integrity of the kidney. Mediates renal uptake of matrix metalloproteinase MMP2 in complex with metalloproteinase inhibitor TIMP1. Mediates endocytosis of Sonic hedgehog protein N-product (ShhN), the active product of SHH. Also mediates ShhN transcytosis. In the embryonic neuroepithelium, mediates endocytic uptake and degradation of BMP4, is required for correct SHH localization in the ventral neural tube and plays a role in patterning of the ventral telencephalon. Required at the onset of neurulation to sequester SHH on the apical surface of neuroepithelial cells of the rostral diencephalon ventral midline and to control PTCH1-dependent uptake and intracellular trafficking of SHH. During neurulation, required in neuroepithelial cells for uptake of folate bound to the folate receptor FOLR1 which is necessary for neural tube closure. In the adult brain, negatively regulates BMP signaling in the subependymal zone which enables neurogenesis to proceed. In astrocytes, mediates endocytosis of ALB which is required for the synthesis of the neurotrophic factor oleic acid. Involved in neurite branching. During optic nerve development, required for SHH-mediated migration and proliferation of oligodendrocyte precursor cells. Mediates endocytic uptake and clearance of SHH in the retinal margin which protects retinal progenitor cells from mitogenic stimuli and keeps them quiescent. Plays a role in reproductive organ development by mediating uptake in reproductive tissues of androgen and estrogen bound to the sex hormone binding protein SHBG. Mediates endocytosis of angiotensin-2. Also mediates endocytosis of angiotensin 1-7. Binds to the complex composed of beta-amyloid protein 40 and CLU/APOJ and mediates its endocytosis and lysosomal degradation. Required for embryonic heart development. Required for normal hearing, possibly through interaction with estrogen in the inner ear. The protein is Low-density lipoprotein receptor-related protein 2 (Lrp2) of Mus musculus (Mouse).